Here is an 87-residue protein sequence, read N- to C-terminus: Small ribosomal subunit protein uS15c (87 aa).

It belongs to the universal ribosomal protein uS15 family. Part of the 30S ribosomal subunit.

The protein resides in the plastid. It localises to the chloroplast. This is Small ribosomal subunit protein uS15c (rps15) from Coffea arabica (Arabian coffee).